The sequence spans 113 residues: Large ribosomal subunit protein uL22 (113 aa).

It belongs to the universal ribosomal protein uL22 family. Part of the 50S ribosomal subunit.

In terms of biological role, this protein binds specifically to 23S rRNA; its binding is stimulated by other ribosomal proteins, e.g. L4, L17, and L20. It is important during the early stages of 50S assembly. It makes multiple contacts with different domains of the 23S rRNA in the assembled 50S subunit and ribosome. Functionally, the globular domain of the protein is located near the polypeptide exit tunnel on the outside of the subunit, while an extended beta-hairpin is found that lines the wall of the exit tunnel in the center of the 70S ribosome. This chain is Large ribosomal subunit protein uL22, found in Roseiflexus castenholzii (strain DSM 13941 / HLO8).